The sequence spans 525 residues: NAD(P)H-quinone oxidoreductase chain 4-1 (525 aa).

14 helical membrane passes run 4-24 (FPWL…IPII), 37-57 (LAVG…GFDL), 89-109 (LIIL…PVTL), 111-131 (PKLF…VFAV), 134-154 (ILLF…ILSI), 167-187 (FILY…TLAF), 210-230 (LLLY…FPLH), 241-261 (TAPA…YALL), 273-293 (AVFA…AAFT), 309-329 (ISHM…GMSG), 330-350 (AMLQ…MVGA), 385-405 (LALP…GFAT), 416-436 (IVVV…LSML), and 462-482 (VFII…PKLI).

This sequence belongs to the complex I subunit 4 family.

Its subcellular location is the cellular thylakoid membrane. It catalyses the reaction a plastoquinone + NADH + (n+1) H(+)(in) = a plastoquinol + NAD(+) + n H(+)(out). The catalysed reaction is a plastoquinone + NADPH + (n+1) H(+)(in) = a plastoquinol + NADP(+) + n H(+)(out). Functionally, NDH-1 shuttles electrons from NAD(P)H, via FMN and iron-sulfur (Fe-S) centers, to quinones in the respiratory chain. The immediate electron acceptor for the enzyme in this species is believed to be plastoquinone. Couples the redox reaction to proton translocation (for every two electrons transferred, four hydrogen ions are translocated across the cytoplasmic membrane), and thus conserves the redox energy in a proton gradient. The chain is NAD(P)H-quinone oxidoreductase chain 4-1 (ndhD1) from Synechocystis sp. (strain ATCC 27184 / PCC 6803 / Kazusa).